Consider the following 1405-residue polypeptide: DNA-directed RNA polymerase subunit beta' (1405 aa).

4 residues coordinate Zn(2+): Cys-70, Cys-72, Cys-85, and Cys-88. Asp-460, Asp-462, and Asp-464 together coordinate Mg(2+). Residues Cys-815, Cys-890, Cys-897, and Cys-900 each contribute to the Zn(2+) site. Residues 1375-1405 (GLTDSEMETLSGKPAGAEPVAALADAGADEE) are disordered.

It belongs to the RNA polymerase beta' chain family. In terms of assembly, the RNAP catalytic core consists of 2 alpha, 1 beta, 1 beta' and 1 omega subunit. When a sigma factor is associated with the core the holoenzyme is formed, which can initiate transcription. Requires Mg(2+) as cofactor. Zn(2+) serves as cofactor.

The enzyme catalyses RNA(n) + a ribonucleoside 5'-triphosphate = RNA(n+1) + diphosphate. DNA-dependent RNA polymerase catalyzes the transcription of DNA into RNA using the four ribonucleoside triphosphates as substrates. This Xanthomonas oryzae pv. oryzae (strain MAFF 311018) protein is DNA-directed RNA polymerase subunit beta'.